Reading from the N-terminus, the 1120-residue chain is DNA-directed RNA polymerase subunit beta (1120 aa).

This sequence belongs to the RNA polymerase beta chain family. In plastids the minimal PEP RNA polymerase catalytic core is composed of four subunits: alpha, beta, beta', and beta''. When a (nuclear-encoded) sigma factor is associated with the core the holoenzyme is formed, which can initiate transcription.

Its subcellular location is the plastid. It is found in the chloroplast. The enzyme catalyses RNA(n) + a ribonucleoside 5'-triphosphate = RNA(n+1) + diphosphate. DNA-dependent RNA polymerase catalyzes the transcription of DNA into RNA using the four ribonucleoside triphosphates as substrates. The protein is DNA-directed RNA polymerase subunit beta of Gracilaria tenuistipitata var. liui (Red alga).